The following is a 258-amino-acid chain: DNA repair protein RecO (258 aa).

This sequence belongs to the RecO family.

In terms of biological role, involved in DNA repair and RecF pathway recombination. The polypeptide is DNA repair protein RecO (Lactiplantibacillus plantarum (strain ATCC BAA-793 / NCIMB 8826 / WCFS1) (Lactobacillus plantarum)).